The primary structure comprises 221 residues: ATP phosphoribosyltransferase (221 aa).

It belongs to the ATP phosphoribosyltransferase family. Short subfamily. As to quaternary structure, heteromultimer composed of HisG and HisZ subunits.

The protein localises to the cytoplasm. The catalysed reaction is 1-(5-phospho-beta-D-ribosyl)-ATP + diphosphate = 5-phospho-alpha-D-ribose 1-diphosphate + ATP. Its pathway is amino-acid biosynthesis; L-histidine biosynthesis; L-histidine from 5-phospho-alpha-D-ribose 1-diphosphate: step 1/9. In terms of biological role, catalyzes the condensation of ATP and 5-phosphoribose 1-diphosphate to form N'-(5'-phosphoribosyl)-ATP (PR-ATP). Has a crucial role in the pathway because the rate of histidine biosynthesis seems to be controlled primarily by regulation of HisG enzymatic activity. This Anaeromyxobacter dehalogenans (strain 2CP-C) protein is ATP phosphoribosyltransferase.